A 222-amino-acid polypeptide reads, in one-letter code: Cytidylate kinase (222 aa).

9 to 17 is a binding site for ATP; sequence GPSGAGKST.

It belongs to the cytidylate kinase family. Type 1 subfamily.

The protein resides in the cytoplasm. It catalyses the reaction CMP + ATP = CDP + ADP. The catalysed reaction is dCMP + ATP = dCDP + ADP. This Thermodesulfovibrio yellowstonii (strain ATCC 51303 / DSM 11347 / YP87) protein is Cytidylate kinase.